A 258-amino-acid polypeptide reads, in one-letter code: NAD kinase (258 aa).

The active-site Proton acceptor is Asp-51. Residues 51–52 (DG), 119–120 (ND), Lys-130, Asp-149, 160–165 (TAYSLS), and Ala-184 contribute to the NAD(+) site.

This sequence belongs to the NAD kinase family. In terms of assembly, homodimer. The cofactor is a divalent metal cation.

The protein localises to the cytoplasm. The enzyme catalyses NAD(+) + ATP = ADP + NADP(+) + H(+). Functionally, involved in the regulation of the intracellular balance between NAD(H) and NADP(H), and is a key enzyme in the biosynthesis of NADP. Catalyzes specifically the phosphorylation on 2'-hydroxyl of the adenosine moiety of NAD to yield NADP. The chain is NAD kinase (NADK) from Thermotoga maritima (strain ATCC 43589 / DSM 3109 / JCM 10099 / NBRC 100826 / MSB8).